The primary structure comprises 371 residues: MTKSPNLTVAVIGTGFGQAVHIPALQYHQQTQAIAIYHRDLAKAQEVAKSNDLAYSYNNLEELLANPEVQAVTIASPPFLHYEMAKQAILAGKHVLLEKPMTLRVEETIELYHLARQREVQVIPDFEFRFVPAWQYVAELLGQGILGQLKLIKVDWLVGSRANPNRAWNWYAQREKGGGALGALASHTFDYLHWLFGPAQSLAANLSVAIAERPDPLDNNRLKPVTAEDTALISLTLANDVPCQINITSVAHGGRGHWLEIYGEKGSLVLGSDNLKDYVHGFRIFHHPVGQPMQELTVPTRLDFPKVFADGRLAPVVRVVDEWVQSINQKRTPTPSLRHGVYSQLLMDLTKQAHQEKHWVAVPDLDRLLAQ.

Belongs to the Gfo/Idh/MocA family.

This is an uncharacterized protein from Synechocystis sp. (strain ATCC 27184 / PCC 6803 / Kazusa).